Consider the following 467-residue polypeptide: 3-isopropylmalate dehydratase large subunit (467 aa).

[4Fe-4S] cluster contacts are provided by C347, C408, and C411.

The protein belongs to the aconitase/IPM isomerase family. LeuC type 1 subfamily. As to quaternary structure, heterodimer of LeuC and LeuD. [4Fe-4S] cluster is required as a cofactor.

The catalysed reaction is (2R,3S)-3-isopropylmalate = (2S)-2-isopropylmalate. It functions in the pathway amino-acid biosynthesis; L-leucine biosynthesis; L-leucine from 3-methyl-2-oxobutanoate: step 2/4. In terms of biological role, catalyzes the isomerization between 2-isopropylmalate and 3-isopropylmalate, via the formation of 2-isopropylmaleate. The sequence is that of 3-isopropylmalate dehydratase large subunit from Bordetella pertussis (strain Tohama I / ATCC BAA-589 / NCTC 13251).